The sequence spans 272 residues: 2-C-methyl-D-erythritol 4-phosphate cytidylyltransferase (272 aa).

The protein belongs to the IspD/TarI cytidylyltransferase family. IspD subfamily.

It catalyses the reaction 2-C-methyl-D-erythritol 4-phosphate + CTP + H(+) = 4-CDP-2-C-methyl-D-erythritol + diphosphate. It participates in isoprenoid biosynthesis; isopentenyl diphosphate biosynthesis via DXP pathway; isopentenyl diphosphate from 1-deoxy-D-xylulose 5-phosphate: step 2/6. In terms of biological role, catalyzes the formation of 4-diphosphocytidyl-2-C-methyl-D-erythritol from CTP and 2-C-methyl-D-erythritol 4-phosphate (MEP). The protein is 2-C-methyl-D-erythritol 4-phosphate cytidylyltransferase of Xanthomonas oryzae pv. oryzae (strain MAFF 311018).